Consider the following 357-residue polypeptide: Nicotinate-nucleotide--dimethylbenzimidazole phosphoribosyltransferase (357 aa).

The active-site Proton acceptor is glutamate 323.

It belongs to the CobT family.

The catalysed reaction is 5,6-dimethylbenzimidazole + nicotinate beta-D-ribonucleotide = alpha-ribazole 5'-phosphate + nicotinate + H(+). It participates in nucleoside biosynthesis; alpha-ribazole biosynthesis; alpha-ribazole from 5,6-dimethylbenzimidazole: step 1/2. Catalyzes the synthesis of alpha-ribazole-5'-phosphate from nicotinate mononucleotide (NAMN) and 5,6-dimethylbenzimidazole (DMB). The chain is Nicotinate-nucleotide--dimethylbenzimidazole phosphoribosyltransferase from Nitratidesulfovibrio vulgaris (strain ATCC 29579 / DSM 644 / CCUG 34227 / NCIMB 8303 / VKM B-1760 / Hildenborough) (Desulfovibrio vulgaris).